Consider the following 104-residue polypeptide: Complex III assembly factor LYRM7 (104 aa).

Ser-60 carries the phosphoserine modification.

It belongs to the complex I LYR family. Interacts with UQCRFS1.

The protein resides in the mitochondrion matrix. Functionally, assembly factor required for Rieske Fe-S protein UQCRFS1 incorporation into the cytochrome b-c1 (CIII) complex. Functions as a chaperone, binding to this subunit within the mitochondrial matrix and stabilizing it prior to its translocation and insertion into the late CIII dimeric intermediate within the mitochondrial inner membrane. The polypeptide is Complex III assembly factor LYRM7 (LYRM7) (Pongo abelii (Sumatran orangutan)).